The chain runs to 107 residues: ATP synthase subunit c (107 aa).

The next 3 helical transmembrane spans lie at 4–24 (IVFL…SMNQ), 29–49 (FSIL…AIGM), and 74–94 (MFIA…IALI).

This sequence belongs to the ATPase C chain family. F-type ATPases have 2 components, F(1) - the catalytic core - and F(0) - the membrane proton channel. F(1) has five subunits: alpha(3), beta(3), gamma(1), delta(1), epsilon(1). F(0) has three main subunits: a(1), b(2) and c(10-14). The alpha and beta chains form an alternating ring which encloses part of the gamma chain. F(1) is attached to F(0) by a central stalk formed by the gamma and epsilon chains, while a peripheral stalk is formed by the delta and b chains.

The protein resides in the cell inner membrane. F(1)F(0) ATP synthase produces ATP from ADP in the presence of a proton or sodium gradient. F-type ATPases consist of two structural domains, F(1) containing the extramembraneous catalytic core and F(0) containing the membrane proton channel, linked together by a central stalk and a peripheral stalk. During catalysis, ATP synthesis in the catalytic domain of F(1) is coupled via a rotary mechanism of the central stalk subunits to proton translocation. Its function is as follows. Key component of the F(0) channel; it plays a direct role in translocation across the membrane. A homomeric c-ring of between 10-14 subunits forms the central stalk rotor element with the F(1) delta and epsilon subunits. This Campylobacter lari (strain RM2100 / D67 / ATCC BAA-1060) protein is ATP synthase subunit c.